Reading from the N-terminus, the 660-residue chain is Bifunctional polymyxin resistance protein ArnA (660 aa).

Residues 1–304 are formyltransferase ArnAFT; that stretch reads MKAVVFAYHN…EMYLVEGMRF (304 aa). Residue H104 is the Proton donor; for formyltransferase activity of the active site. (6R)-10-formyltetrahydrofolate contacts are provided by residues R114 and 136 to 140; that span reads TVKPD. Positions 316–660 are dehydrogenase ArnADH; sequence RRQKVLIMGA…FLKTAVEETK (345 aa). Residues D349 and 370–371 each bind NAD(+); that span reads DI. UDP-alpha-D-glucuronate is bound by residues A395, Y400, and 434-435; that span reads TS. E436 (proton acceptor; for decarboxylase activity) is an active-site residue. UDP-alpha-D-glucuronate is bound by residues R462, N494, 528–537, and Y615; that span reads KLIDGGEQKR. R621 serves as the catalytic Proton donor; for decarboxylase activity.

In the N-terminal section; belongs to the Fmt family. UDP-L-Ara4N formyltransferase subfamily. The protein in the C-terminal section; belongs to the NAD(P)-dependent epimerase/dehydratase family. UDP-glucuronic acid decarboxylase subfamily. Homohexamer, formed by a dimer of trimers.

The enzyme catalyses UDP-alpha-D-glucuronate + NAD(+) = UDP-beta-L-threo-pentopyranos-4-ulose + CO2 + NADH. It catalyses the reaction UDP-4-amino-4-deoxy-beta-L-arabinose + (6R)-10-formyltetrahydrofolate = UDP-4-deoxy-4-formamido-beta-L-arabinose + (6S)-5,6,7,8-tetrahydrofolate + H(+). It functions in the pathway nucleotide-sugar biosynthesis; UDP-4-deoxy-4-formamido-beta-L-arabinose biosynthesis; UDP-4-deoxy-4-formamido-beta-L-arabinose from UDP-alpha-D-glucuronate: step 1/3. Its pathway is nucleotide-sugar biosynthesis; UDP-4-deoxy-4-formamido-beta-L-arabinose biosynthesis; UDP-4-deoxy-4-formamido-beta-L-arabinose from UDP-alpha-D-glucuronate: step 3/3. It participates in bacterial outer membrane biogenesis; lipopolysaccharide biosynthesis. Its function is as follows. Bifunctional enzyme that catalyzes the oxidative decarboxylation of UDP-glucuronic acid (UDP-GlcUA) to UDP-4-keto-arabinose (UDP-Ara4O) and the addition of a formyl group to UDP-4-amino-4-deoxy-L-arabinose (UDP-L-Ara4N) to form UDP-L-4-formamido-arabinose (UDP-L-Ara4FN). The modified arabinose is attached to lipid A and is required for resistance to polymyxin and cationic antimicrobial peptides. This is Bifunctional polymyxin resistance protein ArnA from Shewanella sediminis (strain HAW-EB3).